The chain runs to 432 residues: Succinate--CoA ligase [GDP-forming] subunit beta, mitochondrial (432 aa).

A mitochondrion-targeting transit peptide spans 1–37; that stretch reads MAAPVGAQARKLLRDLVLRPPLLAARSQVVQLTSRRW. One can recognise an ATP-grasp domain in the interval 46-274; sequence KKLMSDNGVK…NAEFRQKDIF (229 aa). Q57 lines the GTP pocket. N6-acetyllysine is present on K73. An N6-succinyllysine modification is found at K78. A GTP-binding site is contributed by 90-92; it reads GRG. Residues K111, K132, and K139 each carry the N6-acetyllysine modification. L146 is a binding site for GTP. S161 is modified (phosphoserine). Residues K200, K218, and K227 each carry the N6-acetyllysine modification. Mg(2+) is bound by residues N243 and D257. K271 carries the N6-acetyllysine modification. N308 contributes to the substrate binding site. K338 bears the N6-succinyllysine mark. At K347 the chain carries N6-acetyllysine. 365–367 is a substrate binding site; that stretch reads GIV. An N6-acetyllysine mark is found at K386 and K423.

Belongs to the succinate/malate CoA ligase beta subunit family. GTP-specific subunit beta subfamily. Heterodimer of an alpha and a beta subunit. The beta subunit determines specificity for GTP. Mg(2+) serves as cofactor.

It is found in the mitochondrion. It carries out the reaction GTP + succinate + CoA = succinyl-CoA + GDP + phosphate. The protein operates within carbohydrate metabolism; tricarboxylic acid cycle; succinate from succinyl-CoA (ligase route): step 1/1. GTP-specific succinyl-CoA synthetase functions in the citric acid cycle (TCA), coupling the hydrolysis of succinyl-CoA to the synthesis of GTP and thus represents the only step of substrate-level phosphorylation in the TCA. The beta subunit provides nucleotide specificity of the enzyme and binds the substrate succinate, while the binding sites for coenzyme A and phosphate are found in the alpha subunit. This is Succinate--CoA ligase [GDP-forming] subunit beta, mitochondrial from Bos taurus (Bovine).